A 407-amino-acid polypeptide reads, in one-letter code: Methylthioribose-1-phosphate isomerase (407 aa).

D275 acts as the Proton donor in catalysis.

The protein belongs to the eIF-2B alpha/beta/delta subunits family. MtnA subfamily.

The protein resides in the cytoplasm. Its subcellular location is the nucleus. The catalysed reaction is 5-(methylsulfanyl)-alpha-D-ribose 1-phosphate = 5-(methylsulfanyl)-D-ribulose 1-phosphate. Its pathway is amino-acid biosynthesis; L-methionine biosynthesis via salvage pathway; L-methionine from S-methyl-5-thio-alpha-D-ribose 1-phosphate: step 1/6. Its function is as follows. Catalyzes the interconversion of methylthioribose-1-phosphate (MTR-1-P) into methylthioribulose-1-phosphate (MTRu-1-P). This is Methylthioribose-1-phosphate isomerase from Kluyveromyces lactis (strain ATCC 8585 / CBS 2359 / DSM 70799 / NBRC 1267 / NRRL Y-1140 / WM37) (Yeast).